The chain runs to 303 residues: Nitrogenase iron protein (303 aa).

11-18 (GKGGIGKS) is an ATP binding site. Cysteine 112 serves as a coordination point for [4Fe-4S] cluster. An ADP-ribosylarginine; by dinitrogenase reductase ADP-ribosyltransferase modification is found at arginine 115. Cysteine 147 serves as a coordination point for [4Fe-4S] cluster.

Belongs to the NifH/BchL/ChlL family. Homodimer. Requires [4Fe-4S] cluster as cofactor. The reversible ADP-ribosylation of Arg-115 inactivates the nitrogenase reductase and regulates nitrogenase activity.

It catalyses the reaction N2 + 8 reduced [2Fe-2S]-[ferredoxin] + 16 ATP + 16 H2O = H2 + 8 oxidized [2Fe-2S]-[ferredoxin] + 2 NH4(+) + 16 ADP + 16 phosphate + 6 H(+). Its function is as follows. The key enzymatic reactions in nitrogen fixation are catalyzed by the nitrogenase complex, which has 2 components: the iron protein and the molybdenum-iron protein. This is Nitrogenase iron protein from Wolinella succinogenes (strain ATCC 29543 / DSM 1740 / CCUG 13145 / JCM 31913 / LMG 7466 / NCTC 11488 / FDC 602W) (Vibrio succinogenes).